We begin with the raw amino-acid sequence, 202 residues long: ATP-dependent Clp protease proteolytic subunit (202 aa).

Serine 101 functions as the Nucleophile in the catalytic mechanism. The active site involves histidine 126.

This sequence belongs to the peptidase S14 family. As to quaternary structure, component of the chloroplastic Clp protease core complex.

Its subcellular location is the plastid. The protein localises to the chloroplast stroma. It carries out the reaction Hydrolysis of proteins to small peptides in the presence of ATP and magnesium. alpha-casein is the usual test substrate. In the absence of ATP, only oligopeptides shorter than five residues are hydrolyzed (such as succinyl-Leu-Tyr-|-NHMec, and Leu-Tyr-Leu-|-Tyr-Trp, in which cleavage of the -Tyr-|-Leu- and -Tyr-|-Trp bonds also occurs).. Its function is as follows. Cleaves peptides in various proteins in a process that requires ATP hydrolysis. Has a chymotrypsin-like activity. Plays a major role in the degradation of misfolded proteins. In Nuphar advena (Common spatterdock), this protein is ATP-dependent Clp protease proteolytic subunit.